The following is a 136-amino-acid chain: Small ribosomal subunit protein uS12 (136 aa).

Asp89 carries the 3-methylthioaspartic acid modification. The interval 101–136 (SLDTSGVADRKQSRSKYGAKQPKAGVPAPVKGKGKR) is disordered.

It belongs to the universal ribosomal protein uS12 family. Part of the 30S ribosomal subunit. Contacts proteins S8 and S17. May interact with IF1 in the 30S initiation complex.

Functionally, with S4 and S5 plays an important role in translational accuracy. In terms of biological role, interacts with and stabilizes bases of the 16S rRNA that are involved in tRNA selection in the A site and with the mRNA backbone. Located at the interface of the 30S and 50S subunits, it traverses the body of the 30S subunit contacting proteins on the other side and probably holding the rRNA structure together. The combined cluster of proteins S8, S12 and S17 appears to hold together the shoulder and platform of the 30S subunit. The sequence is that of Small ribosomal subunit protein uS12 from Pelodictyon phaeoclathratiforme (strain DSM 5477 / BU-1).